Here is a 425-residue protein sequence, read N- to C-terminus: Potassium/proton antiporter CemA (425 aa).

The chain crosses the membrane as a helical span at residues 89-109 (LFLTTVKCLFILLFVPLGINF). Residues 159–278 (LSENQIFFGL…KTDFASVFRT (120 aa)) are insert. Residues 173–192 (STFPSSEKSQKSEHFSNQDE) are disordered. Residues 180-192 (KSQKSEHFSNQDE) show a composition bias toward basic and acidic residues. The next 3 membrane-spanning stretches (helical) occupy residues 300-320 (IEAI…CYLL), 350-370 (ILFI…ELFF), and 386-406 (IFLL…YLIF).

This sequence belongs to the CemA family.

The protein localises to the plastid. It localises to the chloroplast inner membrane. The enzyme catalyses K(+)(in) + H(+)(out) = K(+)(out) + H(+)(in). Functionally, contributes to K(+)/H(+) antiport activity by supporting proton efflux to control proton extrusion and homeostasis in chloroplasts in a light-dependent manner to modulate photosynthesis. Prevents excessive induction of non-photochemical quenching (NPQ) under continuous-light conditions. Indirectly promotes efficient inorganic carbon uptake into chloroplasts. The protein is Potassium/proton antiporter CemA of Tetradesmus obliquus (Green alga).